The following is a 48-amino-acid chain: Small ribosomal subunit protein uS14 (48 aa).

Residues cysteine 13, cysteine 16, cysteine 31, and cysteine 34 each coordinate Zn(2+).

This sequence belongs to the universal ribosomal protein uS14 family. Zinc-binding uS14 subfamily. In terms of assembly, part of the 30S ribosomal subunit. It depends on Zn(2+) as a cofactor.

Functionally, binds 16S rRNA, required for the assembly of 30S particles. The sequence is that of Small ribosomal subunit protein uS14 from Methanopyrus kandleri (strain AV19 / DSM 6324 / JCM 9639 / NBRC 100938).